A 462-amino-acid polypeptide reads, in one-letter code: ATP synthase subunit beta (462 aa).

An ATP-binding site is contributed by 151 to 158; sequence GGAGVGKT.

This sequence belongs to the ATPase alpha/beta chains family. In terms of assembly, F-type ATPases have 2 components, CF(1) - the catalytic core - and CF(0) - the membrane proton channel. CF(1) has five subunits: alpha(3), beta(3), gamma(1), delta(1), epsilon(1). CF(0) has four main subunits: a(1), b(1), b'(1) and c(9-12).

Its subcellular location is the cell inner membrane. It catalyses the reaction ATP + H2O + 4 H(+)(in) = ADP + phosphate + 5 H(+)(out). Produces ATP from ADP in the presence of a proton gradient across the membrane. The catalytic sites are hosted primarily by the beta subunits. This Chlorobium phaeovibrioides (strain DSM 265 / 1930) (Prosthecochloris vibrioformis (strain DSM 265)) protein is ATP synthase subunit beta.